A 117-amino-acid chain; its full sequence is Cell division protein FtsB (117 aa).

Residues Met-1–Trp-6 lie on the Cytoplasmic side of the membrane. Residues Met-7–Phe-24 form a helical membrane-spanning segment. The Periplasmic segment spans residues Gly-25–Pro-117. A coiled-coil region spans residues Ser-29–Ala-69.

Belongs to the FtsB family. Part of a complex composed of FtsB, FtsL and FtsQ.

Its subcellular location is the cell inner membrane. Essential cell division protein. May link together the upstream cell division proteins, which are predominantly cytoplasmic, with the downstream cell division proteins, which are predominantly periplasmic. In Stenotrophomonas maltophilia (strain R551-3), this protein is Cell division protein FtsB.